Consider the following 204-residue polypeptide: Elongation factor Ts (204 aa).

An involved in Mg(2+) ion dislocation from EF-Tu region spans residues 80 to 83 (TDFV).

This sequence belongs to the EF-Ts family.

Its subcellular location is the cytoplasm. Its function is as follows. Associates with the EF-Tu.GDP complex and induces the exchange of GDP to GTP. It remains bound to the aminoacyl-tRNA.EF-Tu.GTP complex up to the GTP hydrolysis stage on the ribosome. The protein is Elongation factor Ts of Caldicellulosiruptor bescii (strain ATCC BAA-1888 / DSM 6725 / KCTC 15123 / Z-1320) (Anaerocellum thermophilum).